We begin with the raw amino-acid sequence, 101 residues long: Small ribosomal subunit protein uS14A (101 aa).

The tract at residues 35–56 is disordered; the sequence is TSSYEQRLDAQRALSRQPRDAS.

This sequence belongs to the universal ribosomal protein uS14 family. In terms of assembly, part of the 30S ribosomal subunit. Contacts proteins S3 and S10.

Binds 16S rRNA, required for the assembly of 30S particles and may also be responsible for determining the conformation of the 16S rRNA at the A site. This is Small ribosomal subunit protein uS14A from Mycobacterium marinum (strain ATCC BAA-535 / M).